The following is a 369-amino-acid chain: Molybdenum import ATP-binding protein ModC (369 aa).

In terms of domain architecture, ABC transporter spans 4 to 239 (LQLRAVVADR…PRSRFGARIA (236 aa)). 31 to 38 (GPNGAGKS) is an ATP binding site. Positions 293 to 361 (HGSPRNIVGL…VKAQEVALHP (69 aa)) constitute a Mop domain.

This sequence belongs to the ABC transporter superfamily. Molybdate importer (TC 3.A.1.8) family. The complex is composed of two ATP-binding proteins (ModC), two transmembrane proteins (ModB) and a solute-binding protein (ModA).

It is found in the cell membrane. It carries out the reaction molybdate(out) + ATP + H2O = molybdate(in) + ADP + phosphate + H(+). Functionally, part of the ABC transporter complex ModABC involved in molybdenum import. Responsible for energy coupling to the transport system. This chain is Molybdenum import ATP-binding protein ModC, found in Mycobacterium tuberculosis (strain CDC 1551 / Oshkosh).